Here is a 503-residue protein sequence, read N- to C-terminus: Catalase (503 aa).

The first 21 residues, 1 to 21 (MHMSKSFLIISMGFVAVSVQA), serve as a signal peptide directing secretion. Catalysis depends on residues His72 and Asn145. Tyr353 is a binding site for heme.

The protein belongs to the catalase family. The cofactor is heme.

Its subcellular location is the periplasm. It catalyses the reaction 2 H2O2 = O2 + 2 H2O. In terms of biological role, decomposes hydrogen peroxide into water and oxygen; serves to protect cells from the toxic effects of hydrogen peroxide. This Vibrio cholerae serotype O1 (strain ATCC 39315 / El Tor Inaba N16961) protein is Catalase.